Consider the following 125-residue polypeptide: Barwin (125 aa).

Residue Gln1 is modified to Pyrrolidone carboxylic acid. The region spanning 1 to 125 (QQANDVRATY…VNYQFVDCRD (125 aa)) is the Barwin domain. Disulfide bonds link Cys31/Cys63, Cys52/Cys86, and Cys66/Cys123.

May be involved in a defense mechanism. Probable plant lectin. Binds weakly a chitin analog. This chain is Barwin, found in Hordeum vulgare (Barley).